The primary structure comprises 149 residues: Deoxyuridine 5'-triphosphate nucleotidohydrolase (149 aa).

Substrate-binding positions include 68–70, asparagine 81, 85–87, and methionine 95; these read RSG and LID.

This sequence belongs to the dUTPase family. Requires Mg(2+) as cofactor.

The catalysed reaction is dUTP + H2O = dUMP + diphosphate + H(+). It participates in pyrimidine metabolism; dUMP biosynthesis; dUMP from dCTP (dUTP route): step 2/2. In terms of biological role, this enzyme is involved in nucleotide metabolism: it produces dUMP, the immediate precursor of thymidine nucleotides and it decreases the intracellular concentration of dUTP so that uracil cannot be incorporated into DNA. This chain is Deoxyuridine 5'-triphosphate nucleotidohydrolase, found in Janthinobacterium sp. (strain Marseille) (Minibacterium massiliensis).